A 173-amino-acid chain; its full sequence is Propanediol dehydratase small subunit (173 aa).

Belongs to the diol/glycerol dehydratase small subunit family. The propanediol dehydratase enzyme is a heterotrimeric complex composed of a large (PduC), a medium (PduD) and a small (PduE) subunit. It depends on adenosylcob(III)alamin as a cofactor.

Its subcellular location is the bacterial microcompartment. It carries out the reaction propane-1,2-diol = propanal + H2O. Its pathway is polyol metabolism; 1,2-propanediol degradation. Inhibited by glycerol. In terms of biological role, part of the PduCDE complex that catalyzes the dehydration of 1,2-propanediol (1,2-PD) to propionaldehyde. Required for S.typhimurium growth on 1,2-PD as the sole carbon and energy source. Localized in the bacterial microcompartment (BMC) dedicated to 1,2-PD degradation. Functionally, the 1,2-PD-specific bacterial microcompartment (BMC) concentrates low levels of 1,2-PD catabolic enzymes, concentrates volatile reaction intermediates thus enhancing pathway flux and keeps the level of toxic, mutagenic propionaldehyde low. The sequence is that of Propanediol dehydratase small subunit from Salmonella typhimurium (strain LT2 / SGSC1412 / ATCC 700720).